A 205-amino-acid polypeptide reads, in one-letter code: Small ribosomal subunit protein uS4 (205 aa).

Residues 1-16 (MSKRETTKYKIDRRMG) are compositionally biased toward basic and acidic residues. Residues 1-46 (MSKRETTKYKIDRRMGENIWGRPKSPVNRRDYGPGQHGQRRKGKLS) form a disordered region. The 64-residue stretch at 94–157 (SRLDAVIYRA…KQLVLVLESV (64 aa)) folds into the S4 RNA-binding domain.

It belongs to the universal ribosomal protein uS4 family. In terms of assembly, part of the 30S ribosomal subunit. Contacts protein S5. The interaction surface between S4 and S5 is involved in control of translational fidelity.

One of the primary rRNA binding proteins, it binds directly to 16S rRNA where it nucleates assembly of the body of the 30S subunit. Functionally, with S5 and S12 plays an important role in translational accuracy. The protein is Small ribosomal subunit protein uS4 of Bartonella henselae (strain ATCC 49882 / DSM 28221 / CCUG 30454 / Houston 1) (Rochalimaea henselae).